Consider the following 432-residue polypeptide: Adenylosuccinate synthetase (432 aa).

GTP-binding positions include 12-18 (GDEGKGK) and 40-42 (GHT). The active-site Proton acceptor is Asp-13. Mg(2+)-binding residues include Asp-13 and Gly-40. IMP is bound by residues 13 to 16 (DEGK), 38 to 41 (NAGH), Thr-128, Arg-142, Gln-223, Thr-238, and Arg-302. Residue His-41 is the Proton donor of the active site. 298-304 (TTTGRPR) lines the substrate pocket. Residues Arg-304, 330 to 332 (HLD), and 417 to 419 (GVG) each bind GTP.

This sequence belongs to the adenylosuccinate synthetase family. In terms of assembly, homodimer. Mg(2+) is required as a cofactor.

It localises to the cytoplasm. The enzyme catalyses IMP + L-aspartate + GTP = N(6)-(1,2-dicarboxyethyl)-AMP + GDP + phosphate + 2 H(+). It functions in the pathway purine metabolism; AMP biosynthesis via de novo pathway; AMP from IMP: step 1/2. Plays an important role in the de novo pathway of purine nucleotide biosynthesis. Catalyzes the first committed step in the biosynthesis of AMP from IMP. The sequence is that of Adenylosuccinate synthetase from Symbiobacterium thermophilum (strain DSM 24528 / JCM 14929 / IAM 14863 / T).